Here is a 310-residue protein sequence, read N- to C-terminus: Carbamate kinase (310 aa).

It belongs to the carbamate kinase family.

It localises to the cytoplasm. It carries out the reaction hydrogencarbonate + NH4(+) + ATP = carbamoyl phosphate + ADP + H2O + H(+). It functions in the pathway metabolic intermediate metabolism; carbamoyl phosphate degradation; CO(2) and NH(3) from carbamoyl phosphate: step 1/1. The chain is Carbamate kinase (arcC) from Staphylococcus epidermidis (strain ATCC 35984 / DSM 28319 / BCRC 17069 / CCUG 31568 / BM 3577 / RP62A).